A 552-amino-acid polypeptide reads, in one-letter code: Ferry endosomal RAB5 effector complex subunit 3 (552 aa).

Residues 383–403 (LKESLDSGNQNGGNDDKTKNA) are disordered.

As to quaternary structure, component of the FERRY complex composed of five subunits, TBCK, PPP1R21, FERRY3, CRYZL1 and GATD1 with a ratio of 1:2:1:2:4, respectively.

The protein localises to the cytoplasm. The protein resides in the early endosome. In terms of biological role, component of the FERRY complex (Five-subunit Endosomal Rab5 and RNA/ribosome intermediary). The FERRY complex directly interacts with mRNAs and RAB5A, and functions as a RAB5A effector involved in the localization and the distribution of specific mRNAs most likely by mediating their endosomal transport. The complex recruits mRNAs and ribosomes to early endosomes through direct mRNA-interaction. Plays a role in mast cell degranulation. This Homo sapiens (Human) protein is Ferry endosomal RAB5 effector complex subunit 3.